The primary structure comprises 368 residues: 2-aminoethylphosphonate--pyruvate transaminase (368 aa).

At Lys-192 the chain carries N6-(pyridoxal phosphate)lysine.

The protein belongs to the class-V pyridoxal-phosphate-dependent aminotransferase family. PhnW subfamily. Homodimer. The cofactor is pyridoxal 5'-phosphate.

The catalysed reaction is (2-aminoethyl)phosphonate + pyruvate = phosphonoacetaldehyde + L-alanine. Its function is as follows. Involved in phosphonate degradation. This is 2-aminoethylphosphonate--pyruvate transaminase from Pseudomonas entomophila (strain L48).